A 546-amino-acid polypeptide reads, in one-letter code: Chaperonin GroEL 2 (546 aa).

Residues 30-33 (TLGP), Lys51, 87-91 (DGTTT), Gly415, 479-481 (NAA), and Asp495 contribute to the ATP site. Positions 524–546 (APKDAPPAQPAGVPGAGGTGFDF) are disordered. Residues 537–546 (PGAGGTGFDF) are compositionally biased toward gly residues.

It belongs to the chaperonin (HSP60) family. Forms a cylinder of 14 subunits composed of two heptameric rings stacked back-to-back. Interacts with the co-chaperonin GroES.

The protein localises to the cytoplasm. The catalysed reaction is ATP + H2O + a folded polypeptide = ADP + phosphate + an unfolded polypeptide.. Its function is as follows. Together with its co-chaperonin GroES, plays an essential role in assisting protein folding. The GroEL-GroES system forms a nano-cage that allows encapsulation of the non-native substrate proteins and provides a physical environment optimized to promote and accelerate protein folding. The chain is Chaperonin GroEL 2 from Burkholderia thailandensis (strain ATCC 700388 / DSM 13276 / CCUG 48851 / CIP 106301 / E264).